The primary structure comprises 163 residues: Endoribonuclease YbeY (163 aa).

Zn(2+)-binding residues include H121, H125, and H131.

Belongs to the endoribonuclease YbeY family. It depends on Zn(2+) as a cofactor.

The protein resides in the cytoplasm. Functionally, single strand-specific metallo-endoribonuclease involved in late-stage 70S ribosome quality control and in maturation of the 3' terminus of the 16S rRNA. The protein is Endoribonuclease YbeY of Synechococcus sp. (strain JA-2-3B'a(2-13)) (Cyanobacteria bacterium Yellowstone B-Prime).